The sequence spans 82 residues: MASSEQEILAGLAEIVNEETGLPTDSVQLDKSFTDDLDIDSLSMMTIVTQAEDKFSVTIPDDEVKNLVTVGDAVTYIAGAQA.

In terms of domain architecture, Carrier spans 3-81 (SSEQEILAGL…DAVTYIAGAQ (79 aa)). Ser41 is modified (O-(pantetheine 4'-phosphoryl)serine).

Belongs to the acyl carrier protein (ACP) family. In terms of processing, 4'-phosphopantetheine is transferred from CoA to a specific serine of apo-ACP by AcpS. This modification is essential for activity because fatty acids are bound in thioester linkage to the sulfhydryl of the prosthetic group.

The protein localises to the cytoplasm. Its pathway is lipid metabolism; fatty acid biosynthesis. In terms of biological role, carrier of the growing fatty acid chain in fatty acid biosynthesis. This is Acyl carrier protein from Beutenbergia cavernae (strain ATCC BAA-8 / DSM 12333 / CCUG 43141 / JCM 11478 / NBRC 16432 / NCIMB 13614 / HKI 0122).